The sequence spans 227 residues: Cytochrome c oxidase subunit 2 (227 aa).

Residues 1 to 14 (MAYPLQLGLQDATS) are Mitochondrial intermembrane-facing. Residues 15–45 (PIMEELMNFHDHTLMIVFLISSLVLYIISLM) form a helical membrane-spanning segment. Topologically, residues 46-59 (LTTKLTHTSTMDAQ) are mitochondrial matrix. Residues 60–87 (EVETIWTILPAAILVLIALPSLRILYMM) form a helical membrane-spanning segment. The Mitochondrial intermembrane portion of the chain corresponds to 88–227 (DEINNPVLTV…YFENWSASMI (140 aa)). Cu cation-binding residues include H161, C196, E198, C200, H204, and M207. E198 contacts Mg(2+). A Phosphotyrosine modification is found at Y218.

This sequence belongs to the cytochrome c oxidase subunit 2 family. Component of the cytochrome c oxidase (complex IV, CIV), a multisubunit enzyme composed of 14 subunits. The complex is composed of a catalytic core of 3 subunits MT-CO1, MT-CO2 and MT-CO3, encoded in the mitochondrial DNA, and 11 supernumerary subunits COX4I, COX5A, COX5B, COX6A, COX6B, COX6C, COX7A, COX7B, COX7C, COX8 and NDUFA4, which are encoded in the nuclear genome. The complex exists as a monomer or a dimer and forms supercomplexes (SCs) in the inner mitochondrial membrane with NADH-ubiquinone oxidoreductase (complex I, CI) and ubiquinol-cytochrome c oxidoreductase (cytochrome b-c1 complex, complex III, CIII), resulting in different assemblies (supercomplex SCI(1)III(2)IV(1) and megacomplex MCI(2)III(2)IV(2)). Found in a complex with TMEM177, COA6, COX18, COX20, SCO1 and SCO2. Interacts with TMEM177 in a COX20-dependent manner. Interacts with COX20. Interacts with COX16. Cu cation serves as cofactor.

It localises to the mitochondrion inner membrane. The enzyme catalyses 4 Fe(II)-[cytochrome c] + O2 + 8 H(+)(in) = 4 Fe(III)-[cytochrome c] + 2 H2O + 4 H(+)(out). Functionally, component of the cytochrome c oxidase, the last enzyme in the mitochondrial electron transport chain which drives oxidative phosphorylation. The respiratory chain contains 3 multisubunit complexes succinate dehydrogenase (complex II, CII), ubiquinol-cytochrome c oxidoreductase (cytochrome b-c1 complex, complex III, CIII) and cytochrome c oxidase (complex IV, CIV), that cooperate to transfer electrons derived from NADH and succinate to molecular oxygen, creating an electrochemical gradient over the inner membrane that drives transmembrane transport and the ATP synthase. Cytochrome c oxidase is the component of the respiratory chain that catalyzes the reduction of oxygen to water. Electrons originating from reduced cytochrome c in the intermembrane space (IMS) are transferred via the dinuclear copper A center (CU(A)) of subunit 2 and heme A of subunit 1 to the active site in subunit 1, a binuclear center (BNC) formed by heme A3 and copper B (CU(B)). The BNC reduces molecular oxygen to 2 water molecules using 4 electrons from cytochrome c in the IMS and 4 protons from the mitochondrial matrix. This Micaelamys namaquensis (Namaqua rock rat) protein is Cytochrome c oxidase subunit 2 (MT-CO2).